The following is a 261-amino-acid chain: Glucose 1-dehydrogenase 4 (261 aa).

11–35 (VITGGSTGLGRAMAVRFGQEEAKVV) serves as a coordination point for NAD(+). Ser-145 contributes to the substrate binding site. Tyr-158 serves as the catalytic Proton acceptor.

The protein belongs to the short-chain dehydrogenases/reductases (SDR) family. Homotetramer.

It carries out the reaction D-glucose + NAD(+) = D-glucono-1,5-lactone + NADH + H(+). The enzyme catalyses D-glucose + NADP(+) = D-glucono-1,5-lactone + NADPH + H(+). In Priestia megaterium (Bacillus megaterium), this protein is Glucose 1-dehydrogenase 4 (gdhIV).